The primary structure comprises 248 residues: Probable transcriptional regulatory protein PSPTO_3980 (248 aa).

Belongs to the TACO1 family.

Its subcellular location is the cytoplasm. In Pseudomonas syringae pv. tomato (strain ATCC BAA-871 / DC3000), this protein is Probable transcriptional regulatory protein PSPTO_3980.